A 416-amino-acid chain; its full sequence is Transmembrane protease serine 11B (416 aa).

Over 1–17 (MYRHGISSQRSWPLWTT) the chain is Cytoplasmic. A helical; Signal-anchor for type II membrane protein membrane pass occupies residues 18-38 (IFIFLGVAAILGVTIGLLVHF). At 39–416 (LAVEKTYYYQ…RNWITSKTGL (378 aa)) the chain is on the extracellular side. An SEA domain is found at 43–160 (KTYYYQGDFH…ASIKLMEISK (118 aa)). N-linked (GlcNAc...) asparagine glycosylation is found at Asn72 and Asn107. Positions 185–415 (IVNGKSSLEG…YRNWITSKTG (231 aa)) constitute a Peptidase S1 domain. A disulfide bridge connects residues Cys210 and Cys226. Residues His225 and Asp270 each act as charge relay system in the active site. Asn315 is a glycosylation site (N-linked (GlcNAc...) asparagine). 2 cysteine pairs are disulfide-bonded: Cys335–Cys351 and Cys362–Cys391. Ser366 (charge relay system) is an active-site residue.

Belongs to the peptidase S1 family.

It is found in the cell membrane. With respect to regulation, inhibited by aprotinin, leupeptin, benzamidine, SERPINA1, SPINT1 and SPINT2. In terms of biological role, serine protease. The protein is Transmembrane protease serine 11B (TMPRSS11B) of Homo sapiens (Human).